Consider the following 247-residue polypeptide: E3 ubiquitin ligase TRIM40 (247 aa).

The RING-type zinc-finger motif lies at 12–55; that stretch reads CPICLDPLKEAVSTDCRHLFCRMCLIRHMDKASVSGVLSCPVCR. The segment at 64-105 adopts a B box-type zinc-finger fold; that stretch reads GDNYICHTHQKRVCRFCESSRHLLCEECLQSPEHRAHTELSI. Cysteine 69, histidine 72, cysteine 91, and histidine 97 together coordinate Zn(2+). Residues 111–148 are a coiled coil; sequence HYKERLNRRSRKLRKDLGDLQRLKAQEEKMLQALQVDW.

Belongs to the TRIM/RBCC family. As to quaternary structure, interacts with NEDD8.

It carries out the reaction S-ubiquitinyl-[E2 ubiquitin-conjugating enzyme]-L-cysteine + [acceptor protein]-L-lysine = [E2 ubiquitin-conjugating enzyme]-L-cysteine + N(6)-ubiquitinyl-[acceptor protein]-L-lysine.. In terms of biological role, E3 ubiquitin-protein ligase that plays a role in the limitation of the innate immune response. Mediates inhibition of the RLR signaling pathway by ubiquitinating RIGI and IFIH1 receptors, leading to their proteasomal degradation. Also promotes the neddylation of IKBKG/NEMO, stabilizing NFKBIA, and thereby inhibiting of NF-kappa-B nuclear translocation and activation. In Rattus norvegicus (Rat), this protein is E3 ubiquitin ligase TRIM40 (Trim40).